The following is a 119-amino-acid chain: Large ribosomal subunit protein bL20 (119 aa).

Belongs to the bacterial ribosomal protein bL20 family.

Its function is as follows. Binds directly to 23S ribosomal RNA and is necessary for the in vitro assembly process of the 50S ribosomal subunit. It is not involved in the protein synthesizing functions of that subunit. The sequence is that of Large ribosomal subunit protein bL20 from Caldicellulosiruptor bescii (strain ATCC BAA-1888 / DSM 6725 / KCTC 15123 / Z-1320) (Anaerocellum thermophilum).